The following is a 792-amino-acid chain: Ubiquitin carboxyl-terminal hydrolase 10 (792 aa).

Ala-2 is modified (N-acetylalanine). Positions 2 to 99 are interaction with p53/TP53; it reads ALHNPQYIFG…ILGCTTSKKI (98 aa). The G3BP1-binding stretch occupies residues 6 to 21; it reads PQYIFGDFSPDEFNQF. Phosphothreonine is present on Thr-24. Positions 126 to 164 are disordered; sequence SNAEAETLENDSGAGGLGQRERKKKKKRPPGYYSYLKDG. 2 positions are modified to phosphoserine: Ser-208 and Ser-223. The segment covering 300–309 has biased composition (basic and acidic residues); sequence DEGADLDPAK. Residues 300-323 form a disordered region; the sequence is DEGADLDPAKPESQSPPAESALSA. The residue at position 314 (Ser-314) is a Phosphoserine. Ser-330 carries the phosphoserine; by ATM modification. Residues 350 to 369 are disordered; it reads PMAYVETKCSPPVPSPLASE. Ser-359 and Ser-364 each carry phosphoserine. The region spanning 409–789 is the USP domain; sequence RGLINKGNWC…TAYLLYYRRV (381 aa). Cys-418 serves as the catalytic Nucleophile. The residue at position 541 (Ser-541) is a Phosphoserine. Positions 542 to 580 are disordered; the sequence is PTHEKHSVSNGPRSDLIEDEELEDTGKGSEDEWEQVGPK. Thr-566 carries the phosphothreonine modification. Position 570 is a phosphoserine (Ser-570). Residue His-743 is the Proton acceptor of the active site.

It belongs to the peptidase C19 family. USP10 subfamily. Found in a deubiquitination complex with TANK, USP10 and ZC3H12A; this complex inhibits genotoxic stress- or interleukin-1-beta (IL1B)-mediated NF-kappa-B activation by promoting IKBKG or TRAF6 deubiquitination. Interacts with IKBKG; this interaction increases in response to DNA damage. Interacts with TANK; this interaction increases in response to DNA damage. Interacts with TRAF6; this interaction increases in response to DNA damage. Interacts with ZC3H12A; this interaction increases in response to DNA damage. Interacts with G3BP1 (via NTF2 domain) and G3BP2 (via NTF2 domain); inhibiting stress granule formation. Post-translationally, phosphorylated by ATM following DNA damage, leading to stabilization and translocation it to the nucleus. Ubiquitinated. Deubiquitinated by USP13.

It localises to the cytoplasm. Its subcellular location is the nucleus. The protein resides in the early endosome. It catalyses the reaction Thiol-dependent hydrolysis of ester, thioester, amide, peptide and isopeptide bonds formed by the C-terminal Gly of ubiquitin (a 76-residue protein attached to proteins as an intracellular targeting signal).. Its activity is regulated as follows. Specifically inhibited by spautin-1 (specific and potent autophagy inhibitor-1), a derivative of MBCQ that binds to USP10 and inhibits deubiquitinase activity. Regulated by PIK3C3/VPS34-containing complexes. Hydrolase that can remove conjugated ubiquitin from target proteins such as p53/TP53, RPS2/us5, RPS3/us3, RPS10/eS10, BECN1, SNX3 and CFTR. Acts as an essential regulator of p53/TP53 stability: in unstressed cells, specifically deubiquitinates p53/TP53 in the cytoplasm, leading to counteract MDM2 action and stabilize p53/TP53. Following DNA damage, translocates to the nucleus and deubiquitinates p53/TP53, leading to regulate the p53/TP53-dependent DNA damage response. Component of a regulatory loop that controls autophagy and p53/TP53 levels: mediates deubiquitination of BECN1, a key regulator of autophagy, leading to stabilize the PIK3C3/VPS34-containing complexes. In turn, PIK3C3/VPS34-containing complexes regulate USP10 stability, suggesting the existence of a regulatory system by which PIK3C3/VPS34-containing complexes regulate p53/TP53 protein levels via USP10 and USP13. Does not deubiquitinate MDM2. Plays a key role in 40S ribosome subunit recycling when a ribosome has stalled during translation: acts both by inhibiting formation of stress granules, which store stalled translation pre-initiation complexes, and mediating deubiquitination of 40S ribosome subunits. Acts as a negative regulator of stress granules formation by lowering G3BP1 and G3BP2 valence, thereby preventing G3BP1 and G3BP2 ability to undergo liquid-liquid phase separation (LLPS) and assembly of stress granules. Promotes 40S ribosome subunit recycling following ribosome dissociation in response to ribosome stalling by mediating deubiquitination of 40S ribosomal proteins RPS2/us5, RPS3/us3 and RPS10/eS10, thereby preventing their degradation by the proteasome. Part of a ribosome quality control that takes place when ribosomes have stalled during translation initiation (iRQC): USP10 acts by removing monoubiquitination of RPS2/us5 and RPS3/us3, promoting 40S ribosomal subunit recycling. Deubiquitinates CFTR in early endosomes, enhancing its endocytic recycling. Involved in a TANK-dependent negative feedback response to attenuate NF-kappa-B activation via deubiquitinating IKBKG or TRAF6 in response to interleukin-1-beta (IL1B) stimulation or upon DNA damage. Deubiquitinates TBX21 leading to its stabilization. Plays a negative role in the RLR signaling pathway upon RNA virus infection by blocking the RIGI-mediated MAVS activation. Mechanistically, removes the unanchored 'Lys-63'-linked polyubiquitin chains of MAVS to inhibit its aggregation, essential for its activation. This chain is Ubiquitin carboxyl-terminal hydrolase 10 (Usp10), found in Mus musculus (Mouse).